A 299-amino-acid chain; its full sequence is UTP--glucose-1-phosphate uridylyltransferase 1 (299 aa).

Belongs to the UDPGP type 2 family.

It carries out the reaction alpha-D-glucose 1-phosphate + UTP + H(+) = UDP-alpha-D-glucose + diphosphate. Its pathway is carbohydrate metabolism; nucleotide-sugar metabolism. The protein is UTP--glucose-1-phosphate uridylyltransferase 1 (hasC1) of Streptococcus pyogenes serotype M6 (strain ATCC BAA-946 / MGAS10394).